A 256-amino-acid polypeptide reads, in one-letter code: 6-carboxyhexanoate--CoA ligase (256 aa).

The protein belongs to the BioW family. In terms of assembly, homodimer. Requires Mg(2+) as cofactor.

The enzyme catalyses heptanedioate + ATP + CoA = 6-carboxyhexanoyl-CoA + AMP + diphosphate. Its pathway is metabolic intermediate metabolism; pimeloyl-CoA biosynthesis; pimeloyl-CoA from pimelate: step 1/1. In terms of biological role, catalyzes the transformation of pimelate into pimeloyl-CoA with concomitant hydrolysis of ATP to AMP. The protein is 6-carboxyhexanoate--CoA ligase of Bacillus amyloliquefaciens (strain ATCC 23350 / DSM 7 / BCRC 11601 / CCUG 28519 / NBRC 15535 / NRRL B-14393 / F).